The following is a 220-amino-acid chain: Protein ABA DEFICIENT 4, chloroplastic (220 aa).

Residues 1–37 (MGFSSFISQPLSSSLSVMKRNVSAKRSELCLDSSKIR) constitute a chloroplast transit peptide. The next 4 helical transmembrane spans lie at 77–97 (IASSVFAVGTTAVLPFYTLMV), 112–132 (SVPYIILGVLYVYLLYISWTP), 154–174 (MFSSEMTLASAWIHLLVVDLF), and 195–215 (SLCLLFCPVGIVSHFVTKAII).

As to expression, expressed in root vasculature, root hairs, leaves, trichomes, sepals, stamens, stigma, pedicels, siliques and embryo.

It is found in the plastid. The protein resides in the chloroplast membrane. In terms of biological role, required for neoxanthin biosynthesis, an intermediary step in abscisic acid (ABA) biosynthesis. Probably not involved directly in the enzymatic conversion of violaxanthin to neoxanthin. Cannot convert violaxanthin to neoxanthin in vitro. Required for ABA biosynthesis in response to drought stress. Required for neoxanthin biosynthesis which is involved in photoprotection of photosystem II (PSII). Neoxanthin acts as an antioxidant within the photosystem PSII supercomplex. This is Protein ABA DEFICIENT 4, chloroplastic from Arabidopsis thaliana (Mouse-ear cress).